Consider the following 529-residue polypeptide: N5-hydroxyornithine acetylase sidL (529 aa).

Disordered stretches follow at residues 59–95 (ASVNGEGHAQPAGDDHATAVDAGDGSAQKRKKRVRPF) and 239–258 (SPWPGSSGSPNDSRPGSPVA). His-462 contacts substrate. The active-site Proton acceptor is the Glu-498.

Belongs to the lysine N-acyltransferase mbtK family.

It is found in the cytoplasm. Its subcellular location is the cytosol. It participates in siderophore biosynthesis. Functionally, acyltransferase; part of the gene cluster that mediates the biosynthesis of at least 11 siderophores, including beauverichelin A, dimerumic acid (DA), Na-dimethyl coprogen (NADC), eleutherazine B, ferricrocin (FC), fusarinine A, fusarinine C (FsC), metachelin A, mevalonolactone, rhodotorulic acid (RA) and tenellin. This cocktail of siderophores for iron metabolism is essential for virulence, and more specifically for the fungal virulence in penetrating through the host cuticle. Siderophore synthesis is also involved in conidial germination under iron-deficient conditions. SIDL contributes to partial production of ferricrocin under iron-limiting conditions via the acetylation of N(5)-hydroxyornithine. This Beauveria bassiana (strain ARSEF 2860) (White muscardine disease fungus) protein is N5-hydroxyornithine acetylase sidL.